Here is a 1675-residue protein sequence, read N- to C-terminus: Clathrin heavy chain 1 (1675 aa).

Alanine 2 is subject to N-acetylalanine. Residues alanine 2–tyrosine 479 are globular terminal domain. WD40-like repeat stretches follow at residues asparagine 24–serine 67, alanine 68–aspartate 107, valine 108–alanine 149, glycine 150–glutamate 195, glycine 196–glutamine 257, asparagine 258–glutamate 301, and threonine 302–glutamate 330. Serine 67 carries the phosphoserine modification. Threonine 105 bears the Phosphothreonine mark. The residue at position 184 (tyrosine 184) is a Phosphotyrosine. A Phosphothreonine modification is found at threonine 394. The binding site for the uncoating ATPase, involved in lattice disassembly stretch occupies residues glutamate 449–aspartate 465. The flexible linker stretch occupies residues leucine 480–arginine 523. The interval isoleucine 524–tyrosine 634 is distal segment. The interval isoleucine 524–methionine 1675 is heavy chain arm. CHCR repeat units follow at residues valine 537–valine 683, alanine 686–valine 828, isoleucine 833–aspartate 972, leucine 979–alanine 1124, tyrosine 1128–alanine 1269, leucine 1274–asparagine 1420, and leucine 1423–phenylalanine 1566. At tyrosine 634 the chain carries Phosphotyrosine. The proximal segment stretch occupies residues alanine 639–methionine 1675. Lysine 737 is modified (N6-succinyllysine). At lysine 856 the chain carries N6-acetyllysine. Tyrosine 899 bears the Phosphotyrosine mark. Position 1167 is a phosphoserine (serine 1167). The residue at position 1206 (tyrosine 1206) is a Phosphotyrosine. The segment at alanine 1213–lysine 1522 is involved in binding clathrin light chain. Phosphoserine is present on serine 1229. The residue at position 1441 (lysine 1441) is an N6-acetyllysine; alternate. Lysine 1441 is subject to N6-succinyllysine; alternate. A phosphotyrosine mark is found at tyrosine 1477 and tyrosine 1487. Serine 1494 bears the Phosphoserine mark. Lysine 1501 is modified (N6-acetyllysine). A trimerization region spans residues alanine 1550–methionine 1675.

The protein belongs to the clathrin heavy chain family. In terms of assembly, clathrin triskelions, composed of 3 heavy chains and 3 light chains, are the basic subunits of the clathrin coat. In the presence of light chains, hub assembly is influenced by both the pH and the concentration of calcium. Interacts with HIP1. Interacts with DENND1A, DENND1B and DENND1C. Interacts with OCRL. Interacts with ERBB2. Interacts with FKBP6. Interacts with CKAP5 and TACC3 forming the TACC3/ch-TOG/clathrin complex located at spindle inter-microtubules bridges; the complex implicates clathrin triskelions; TACC3 and CLTC are proposed to form a composite microtubule interaction surface. Interacts with ATG16L1 (via N-terminus). Interacts with RFTN1; the interaction occurs in response to pathogens. Interacts with TMEM106B (via N-terminus). Interacts with DNAJC6; this interaction produces a local change in heavy-chain contacts, creating a detectable global distortion of the clathrin coat and leads to the recruitment of HSPA8.

It is found in the cytoplasmic vesicle membrane. The protein resides in the membrane. The protein localises to the coated pit. It localises to the melanosome. Its subcellular location is the cytoplasm. It is found in the cytoskeleton. The protein resides in the spindle. In terms of biological role, clathrin is the major protein of the polyhedral coat of coated pits and vesicles. Two different adapter protein complexes link the clathrin lattice either to the plasma membrane or to the trans-Golgi network. Acts as a component of the TACC3/ch-TOG/clathrin complex proposed to contribute to stabilization of kinetochore fibers of the mitotic spindle by acting as inter-microtubule bridge. The TACC3/ch-TOG/clathrin complex is required for the maintenance of kinetochore fiber tension. Plays a role in early autophagosome formation. Interaction with DNAJC6 mediates the recruitment of HSPA8 to the clathrin lattice and creates local destabilization of the lattice promoting uncoating. The polypeptide is Clathrin heavy chain 1 (Bos taurus (Bovine)).